A 90-amino-acid polypeptide reads, in one-letter code: Molybdopterin synthase sulfur carrier subunit (90 aa).

Gly-90 is modified (1-thioglycine; alternate). Gly-90 bears the Glycyl adenylate; alternate mark.

Belongs to the MoaD family. MOCS2A subfamily. As to quaternary structure, heterotetramer; composed of 2 small (Mocs2A) and 2 large (Mocs2B) subunits. Post-translationally, C-terminal thiocarboxylation occurs in 2 steps, it is first acyl-adenylated (-COAMP) via the hesA/moeB/thiF part of MOCS3, then thiocarboxylated (-COSH) via the rhodanese domain of MOCS3.

It localises to the cytoplasm. Its pathway is cofactor biosynthesis; molybdopterin biosynthesis. In terms of biological role, acts as a sulfur carrier required for molybdopterin biosynthesis. Component of the molybdopterin synthase complex that catalyzes the conversion of precursor Z into molybdopterin by mediating the incorporation of 2 sulfur atoms into precursor Z to generate a dithiolene group. In the complex, serves as sulfur donor by being thiocarboxylated (-COSH) at its C-terminus by MOCS3. After interaction with Mocs2B, the sulfur is then transferred to precursor Z to form molybdopterin. The sequence is that of Molybdopterin synthase sulfur carrier subunit from Drosophila yakuba (Fruit fly).